Reading from the N-terminus, the 38-residue chain is Photosystem II reaction center protein L (38 aa).

Residues 17-37 (SLYWGLLLIFVLAVLFSNYFF) form a helical membrane-spanning segment.

This sequence belongs to the PsbL family. As to quaternary structure, PSII is composed of 1 copy each of membrane proteins PsbA, PsbB, PsbC, PsbD, PsbE, PsbF, PsbH, PsbI, PsbJ, PsbK, PsbL, PsbM, PsbT, PsbX, PsbY, PsbZ, Psb30/Ycf12, at least 3 peripheral proteins of the oxygen-evolving complex and a large number of cofactors. It forms dimeric complexes.

It is found in the plastid. The protein resides in the chloroplast thylakoid membrane. One of the components of the core complex of photosystem II (PSII). PSII is a light-driven water:plastoquinone oxidoreductase that uses light energy to abstract electrons from H(2)O, generating O(2) and a proton gradient subsequently used for ATP formation. It consists of a core antenna complex that captures photons, and an electron transfer chain that converts photonic excitation into a charge separation. This subunit is found at the monomer-monomer interface and is required for correct PSII assembly and/or dimerization. The polypeptide is Photosystem II reaction center protein L (Oenothera argillicola (Appalachian evening primrose)).